Consider the following 548-residue polypeptide: Folylpolyglutamate synthase (548 aa).

Residue 130–133 (GKGS) coordinates ATP. 3 residues coordinate Mg(2+): Ser-157, Glu-234, and His-262. ATP-binding residues include Arg-382 and Asp-396.

Belongs to the folylpolyglutamate synthase family. A monovalent cation is required as a cofactor.

It localises to the mitochondrion inner membrane. It is found in the mitochondrion matrix. The protein resides in the cytoplasm. The enzyme catalyses (6S)-5,6,7,8-tetrahydrofolyl-(gamma-L-Glu)(n) + L-glutamate + ATP = (6S)-5,6,7,8-tetrahydrofolyl-(gamma-L-Glu)(n+1) + ADP + phosphate + H(+). The protein operates within cofactor biosynthesis; tetrahydrofolylpolyglutamate biosynthesis. Catalyzes conversion of folates to polyglutamate derivatives allowing concentration of folate compounds in the cell and the intracellular retention of these cofactors, which are important substrates for most of the folate-dependent enzymes that are involved in one-carbon transfer reactions involved in purine, pyrimidine and amino acid synthesis. Required for methionine synthesis and maintenance of intact mitochondrial DNA. Involved in telomere maintenance. The chain is Folylpolyglutamate synthase from Saccharomyces cerevisiae (strain RM11-1a) (Baker's yeast).